A 227-amino-acid chain; its full sequence is AN1-type zinc finger protein 3 (227 aa).

The A20-type zinc finger occupies 12 to 44 (PSLPPRCPCGFWGSSKTMNLCSKCFADFQKKQP). Positions 18, 20, 32, and 35 each coordinate Zn(2+). Positions 41 to 151 (KKQPDDDSTP…RPEESGRSKQ (111 aa)) are disordered. 2 stretches are compositionally biased toward low complexity: residues 49–59 (TPSTSNSQSDL) and 66–77 (SDNNNTSVTTPT). Polar residues-rich tracts occupy residues 78–94 (LSPS…VTSP) and 111–127 (ITPT…SESE). The span at 135–148 (RLVENPERPEESGR) shows a compositional bias: basic and acidic residues. The AN1-type zinc-finger motif lies at 151–200 (QKSRRRCFQCQTKLELVQQELGSCRCGYVFCMLHRLPEQHDCTFDHMGRG). Zn(2+) is bound by residues C157, C160, C174, C176, C181, H184, H190, and C192.

The polypeptide is AN1-type zinc finger protein 3 (Zfand3) (Rattus norvegicus (Rat)).